Consider the following 190-residue polypeptide: Xanthine phosphoribosyltransferase (190 aa).

Xanthine-binding residues include L20 and N27. 128–132 is a 5-phospho-alpha-D-ribose 1-diphosphate binding site; that stretch reads ANGHA. Xanthine is bound at residue K156.

Belongs to the purine/pyrimidine phosphoribosyltransferase family. Xpt subfamily. In terms of assembly, homodimer.

Its subcellular location is the cytoplasm. The catalysed reaction is XMP + diphosphate = xanthine + 5-phospho-alpha-D-ribose 1-diphosphate. It functions in the pathway purine metabolism; XMP biosynthesis via salvage pathway; XMP from xanthine: step 1/1. In terms of biological role, converts the preformed base xanthine, a product of nucleic acid breakdown, to xanthosine 5'-monophosphate (XMP), so it can be reused for RNA or DNA synthesis. This Pseudomonas paraeruginosa (strain DSM 24068 / PA7) (Pseudomonas aeruginosa (strain PA7)) protein is Xanthine phosphoribosyltransferase.